Reading from the N-terminus, the 888-residue chain is Bifunctional uridylyltransferase/uridylyl-removing enzyme (888 aa).

Positions 1–338 are uridylyltransferase; sequence MIITSPLLDY…LPNYERKIEE (338 aa). Positions 182-204 are disordered; that stretch reads EQAKRHAQHNNTESNLEPDIKNA. A uridylyl-removing region spans residues 339-699; that stretch reads INENFKLVDG…AHRQSAQDAV (361 aa). Residues 457-579 form the HD domain; the sequence is VDAHTLLLIR…LGDMEHLDYL (123 aa). 2 consecutive ACT domains span residues 700-781 and 809-887; these read QIFI…GLMQ and MVEI…IVSQ.

Belongs to the GlnD family. Requires Mg(2+) as cofactor.

It catalyses the reaction [protein-PII]-L-tyrosine + UTP = [protein-PII]-uridylyl-L-tyrosine + diphosphate. It carries out the reaction [protein-PII]-uridylyl-L-tyrosine + H2O = [protein-PII]-L-tyrosine + UMP + H(+). Uridylyltransferase (UTase) activity is inhibited by glutamine, while glutamine activates uridylyl-removing (UR) activity. Functionally, modifies, by uridylylation and deuridylylation, the PII regulatory proteins (GlnB and homologs), in response to the nitrogen status of the cell that GlnD senses through the glutamine level. Under low glutamine levels, catalyzes the conversion of the PII proteins and UTP to PII-UMP and PPi, while under higher glutamine levels, GlnD hydrolyzes PII-UMP to PII and UMP (deuridylylation). Thus, controls uridylylation state and activity of the PII proteins, and plays an important role in the regulation of nitrogen assimilation and metabolism. The protein is Bifunctional uridylyltransferase/uridylyl-removing enzyme of Acinetobacter baylyi (strain ATCC 33305 / BD413 / ADP1).